The following is a 570-amino-acid chain: Probable metalloreductase AIM14 (570 aa).

The next 7 helical transmembrane spans lie at 21–41 (IKYG…LALL), 70–90 (AIHL…HYSL), 101–118 (LGRL…LTLR), 142–162 (IITV…AIDD), 177–197 (FVGF…IGPM), 204–224 (LFYI…PIHS), and 230–250 (FPFL…RIVF). The Ferric oxidoreductase domain occupies 101–219 (LGRLSYALIP…NLVNVAFILL (119 aa)). The FAD-binding FR-type domain occupies 250–388 (FAKSLMILNK…GGSGISFALP (139 aa)). The tract at residues 480–507 (ISNFNSENADSNDKTPETSHSPTKENGS) is disordered.

The protein belongs to the ferric reductase (FRE) family. AIM14 subfamily. In terms of assembly, interacts with ribosomes.

Its subcellular location is the membrane. In terms of biological role, probable cell surface metalloreductase. May be involved in iron or copper homeostasis. The protein is Probable metalloreductase AIM14 (AIM14) of Saccharomyces cerevisiae (strain JAY291) (Baker's yeast).